A 1120-amino-acid chain; its full sequence is Putative GTPase-activating protein AN11010 (1120 aa).

The 189-residue stretch at Gly291–Gly479 folds into the Rab-GAP TBC domain. Disordered regions lie at residues Asp673–Ala702, Asp859–Pro903, Ala960–Ile979, Arg1017–Arg1068, and Gly1081–Ser1120. Over residues Glu864 to Ser878 the composition is skewed to low complexity. Positions Ala960–Pro970 are enriched in polar residues. Residues Asp1023 to Asp1032 show a composition bias toward acidic residues. 2 stretches are compositionally biased toward basic and acidic residues: residues Asp1057 to Arg1068 and Gly1081 to Gln1095.

The chain is Putative GTPase-activating protein AN11010 from Emericella nidulans (strain FGSC A4 / ATCC 38163 / CBS 112.46 / NRRL 194 / M139) (Aspergillus nidulans).